Here is a 495-residue protein sequence, read N- to C-terminus: Geraniol 8-hydroxylase (495 aa).

The helical transmembrane segment at 5 to 25 threads the bilayer; sequence FLTIAIGFLFTITLYQALNFF. Cysteine 438 contacts heme.

Belongs to the cytochrome P450 family. The cofactor is heme. Expressed in leaves, stems and roots.

It localises to the endoplasmic reticulum membrane. The catalysed reaction is (2E)-geraniol + reduced [NADPH--hemoprotein reductase] + O2 = (6E)-8-hydroxygeraniol + oxidized [NADPH--hemoprotein reductase] + H2O + H(+). Functionally, hydroxylase involved in the biosynthesis of hydroxygeraniol, a precursor of the iridoid monoterpenoid swertiamarin. This chain is Geraniol 8-hydroxylase (CYP76B10), found in Swertia mussotii (Felwort).